A 498-amino-acid polypeptide reads, in one-letter code: MRINPTTSGPEVSTLEEKNLGRIAQIIGPVLDVAFPPGKMPNIYNALVVKGRDTVGQQINVTCEVQQLLGNNRVRAVAMSATDGLTRGMEVIDTRAPLSVPVGGATLGRIFNVLGEPVDNLGPVDTRTTSPIHRSAPAFIQLDTKLSIFETGIKVVDLLAPYRRGGKIGLFGGAGVGKTVLIMELINNIAKAHGGVSVFGGVGERTREGNDLYMEMKESGVINEQNIAESKVALVYGQMNEPPGARMRVGLTALTMAEYFRDVNEQDVLLFIDNIFRFVQAGSEVSALLGRMPSAVGYQPTLSTEMGSLQERITSTKEGSITSIQAVYVPADDLTDPAPATTFAHLDATTVLSRGLAAKGIYPAVDPLDSTSTMLQPRIVGEEHYETAQRVKQTLQRYKELQDIIAILGLDELSEEDRLTVARARKIERFLSQPFFVAEVFTGSPGKYVGLAETIRGFQLILSGELDGLPEQAFYLVGNIDEATAKAMNLEVESKLKK.

Residue 172-179 (GGAGVGKT) coordinates ATP.

This sequence belongs to the ATPase alpha/beta chains family. As to quaternary structure, F-type ATPases have 2 components, CF(1) - the catalytic core - and CF(0) - the membrane proton channel. CF(1) has five subunits: alpha(3), beta(3), gamma(1), delta(1), epsilon(1). CF(0) has four main subunits: a(1), b(1), b'(1) and c(9-12).

Its subcellular location is the plastid. The protein localises to the chloroplast thylakoid membrane. It catalyses the reaction ATP + H2O + 4 H(+)(in) = ADP + phosphate + 5 H(+)(out). Produces ATP from ADP in the presence of a proton gradient across the membrane. The catalytic sites are hosted primarily by the beta subunits. This Buxus microphylla (Littleleaf boxwood) protein is ATP synthase subunit beta, chloroplastic.